A 331-amino-acid polypeptide reads, in one-letter code: Ribosomal RNA small subunit methyltransferase H (331 aa).

S-adenosyl-L-methionine is bound by residues 38–40, Asp56, Phe83, Asp100, and Gln107; that span reads GGY. The tract at residues 308–331 is disordered; sequence TDAPAGPVDPQVLGMPLIPKKGRR.

Belongs to the methyltransferase superfamily. RsmH family.

It localises to the cytoplasm. The catalysed reaction is cytidine(1402) in 16S rRNA + S-adenosyl-L-methionine = N(4)-methylcytidine(1402) in 16S rRNA + S-adenosyl-L-homocysteine + H(+). In terms of biological role, specifically methylates the N4 position of cytidine in position 1402 (C1402) of 16S rRNA. The sequence is that of Ribosomal RNA small subunit methyltransferase H from Cereibacter sphaeroides (strain ATCC 17025 / ATH 2.4.3) (Rhodobacter sphaeroides).